The primary structure comprises 193 residues: MSSDSANRDLAPLIALMETEALQRGEFTLASGKKANYYLDCRRVTLHPKGACLIGRAMLDVVLANAKESGVMPAAVGGMAIGADPITASIVTLAGGDDVDLKGFMVRKEPKGHGMGQQVEGPVTPGQKVVIVEDVITSGGSALKAVEAVQAFGLEVQYVLAIIDRLAGGAEAFAQKGLELKTLTTIRDFGLEP.

Residues Arg107, Lys108, Lys111, His113, and 133 to 141 (EDVITSGGS) each bind 5-phospho-alpha-D-ribose 1-diphosphate. Residues Thr137 and Arg165 each contribute to the orotate site.

This sequence belongs to the purine/pyrimidine phosphoribosyltransferase family. PyrE subfamily. In terms of assembly, homodimer. Mg(2+) serves as cofactor.

It carries out the reaction orotidine 5'-phosphate + diphosphate = orotate + 5-phospho-alpha-D-ribose 1-diphosphate. Its pathway is pyrimidine metabolism; UMP biosynthesis via de novo pathway; UMP from orotate: step 1/2. In terms of biological role, catalyzes the transfer of a ribosyl phosphate group from 5-phosphoribose 1-diphosphate to orotate, leading to the formation of orotidine monophosphate (OMP). This chain is Orotate phosphoribosyltransferase, found in Rhodopirellula baltica (strain DSM 10527 / NCIMB 13988 / SH1).